Consider the following 150-residue polypeptide: Soluble pyridine nucleotide transhydrogenase (150 aa).

This sequence belongs to the class-I pyridine nucleotide-disulfide oxidoreductase family. FAD is required as a cofactor.

Its subcellular location is the cytoplasm. It catalyses the reaction NAD(+) + NADPH = NADH + NADP(+). Functionally, conversion of NADPH, generated by peripheral catabolic pathways, to NADH, which can enter the respiratory chain for energy generation. The protein is Soluble pyridine nucleotide transhydrogenase (sthA) of Pectobacterium carotovorum subsp. carotovorum (Erwinia carotovora subsp. carotovora).